The chain runs to 160 residues: MSSINPSLYNDNGVYCSKVIVTKAIKIRDLDQIPQTVLALAATNNGANYDYASPNYITNARKRFKARLNRNPIWYPKMGDTAAIFFARSDQAGWDIRAEVDEAILYTQKQYPHIDINYAVLTPVNTHDLVDMNLIAQLFAEDDAAAAAAANQPNQPNQGQ.

3 repeat units span residues 151-153 (NQP), 154-156 (NQP), and 157-159 (NQG). The tract at residues 151–159 (NQPNQPNQG) is 3 X 3 AA tandem repeats of N-Q-[PG].

Functionally, unknown. Its expression during growth is not required for growth but for the proper initiation of development, therefore playing a role in the transition from growth to development. This Dictyostelium discoideum (Social amoeba) protein is Vegetative-specific protein V4 (lmcB).